Here is a 283-residue protein sequence, read N- to C-terminus: Myeloid differentiation primary response protein MyD88-A (283 aa).

The region spanning 27–105 (RLCLYLNPDA…DILTDLGPLI (79 aa)) is the Death domain. The intermediate domain stretch occupies residues 106–143 (EADCMKYLEKKHVPLPIQDDKVDSSEQYRITKSDDPYG). The region spanning 147-281 (ETFDAFICYC…WFWDKLAKAL (135 aa)) is the TIR domain.

It localises to the cytoplasm. Functionally, adapter protein involved in the Toll-like receptor and IL-1 receptor signaling pathway in the innate immune response. Activates expression of target genes in the Spemann organizer region during early embryonic development. Is required for normal axis formation. This is Myeloid differentiation primary response protein MyD88-A (myd88-a) from Xenopus laevis (African clawed frog).